The following is a 363-amino-acid chain: MKHAPEPAHRHGGAERCAILLVNLGTPDEPSAPALRRYLAEFLSDPRVVEIPRAVWLPILHGVVLRVRPAKSAAKYASIWTAEGSPLKVWTEKQAKLLTGYLGERGHPVLVRAAMRYGQPSVATQLDALKADGATRILVLPLYPQYAAATTASVFDAVYAWAARTRRVPELRFVNHYHDDPGYILALGRCIEDHWMRNGRAERLVLSFHGVPERTLRLGDPYHCECQKTARLLTERLALKPEQVLVTFQSRFGKAKWLEPYTEPTLVQLAQQGIRRVDVACPGFTSDCLETLEEIAQEAREAYLHAGGETFHYIPCLNDRHEWIAALSDIAIRHLQGWPTQTAPDPAALQAQALRARQLGAQA.

2 residues coordinate Fe cation: His-209 and Glu-290.

It belongs to the ferrochelatase family.

It localises to the cytoplasm. The catalysed reaction is heme b + 2 H(+) = protoporphyrin IX + Fe(2+). The protein operates within porphyrin-containing compound metabolism; protoheme biosynthesis; protoheme from protoporphyrin-IX: step 1/1. Functionally, catalyzes the ferrous insertion into protoporphyrin IX. This is Ferrochelatase from Methylibium petroleiphilum (strain ATCC BAA-1232 / LMG 22953 / PM1).